A 245-amino-acid chain; its full sequence is 3-deoxy-manno-octulosonate cytidylyltransferase (245 aa).

It belongs to the KdsB family.

Its subcellular location is the cytoplasm. It catalyses the reaction 3-deoxy-alpha-D-manno-oct-2-ulosonate + CTP = CMP-3-deoxy-beta-D-manno-octulosonate + diphosphate. The protein operates within nucleotide-sugar biosynthesis; CMP-3-deoxy-D-manno-octulosonate biosynthesis; CMP-3-deoxy-D-manno-octulosonate from 3-deoxy-D-manno-octulosonate and CTP: step 1/1. It participates in bacterial outer membrane biogenesis; lipopolysaccharide biosynthesis. Its function is as follows. Activates KDO (a required 8-carbon sugar) for incorporation into bacterial lipopolysaccharide in Gram-negative bacteria. The chain is 3-deoxy-manno-octulosonate cytidylyltransferase from Rhodopseudomonas palustris (strain TIE-1).